An 81-amino-acid polypeptide reads, in one-letter code: Consomatin Le1 (81 aa).

The signal sequence occupies residues 1-22; it reads MQTAYWVMVMMMVWITAPLSEG. The propeptide occupies 23 to 57; that stretch reads GKPNDVIRGLVPDDLTPQLILRSLISRRRSDKDVR. E58 carries the post-translational modification 4-carboxyglutamate. A disulfide bridge connects residues C62 and C67. A D-tryptophan modification is found at W64. P69 carries the 4-hydroxyproline modification. A propeptide spanning residues 71-81 is cleaved from the precursor; it reads LWRRHDLKGKD.

Belongs to the conotoxin C superfamily. Consomatin family. Expressed by the venom duct.

The protein localises to the secreted. Moderately activates human somatostatin receptors (SSTR) with a preferential activation of SSTR1 and SSTR4. In vivo, does not cause behavioral changes in mice within a few minutes of intracranial injection, but causes a progressive loss of movement thereafter. Four to five hours after injection, mice recover, even with the highest dose tested. Shows antinociception and antihyperalgesia activities in two mouse models of acute pain, most probably by acting outside the central nervous system. This Conus lenavati (Cone snail) protein is Consomatin Le1.